The chain runs to 422 residues: Pre-B-cell leukemia transcription factor 2 (422 aa).

Residues 1–43 (MDEQGRLMQARGVGIPGHPIHGGPQTLTPHPMHEPPADNGEPR) are disordered. Over residues 31–43 (PMHEPPADNGEPR) the composition is skewed to basic and acidic residues. The 195-residue stretch at 42–236 (PRKQDIGDIL…VMILRSRFLD (195 aa)) folds into the PBC domain. Residues 49 to 128 (DILQQIMTIT…EGVAGPEKGG (80 aa)) form a PBC-A region. The tract at residues 131–236 (AAAAAAAAAS…VMILRSRFLD (106 aa)) is PBC-B. The segment at residues 237-299 (ARRKRRNFSK…NKRIRYKKNI (63 aa)) is a DNA-binding region (homeobox). Disordered stretches follow at residues 319 to 341 (QGGH…GSFN) and 353 to 422 (QGLN…DTSN). Residues 401 to 410 (VTPSSVTSPT) are compositionally biased toward polar residues.

Belongs to the TALE/PBX homeobox family.

The protein localises to the nucleus. Transcriptional activator that binds the sequence 5'-ATCAATCAA-3'. This is Pre-B-cell leukemia transcription factor 2 from Xenopus tropicalis (Western clawed frog).